Reading from the N-terminus, the 897-residue chain is Isoleucine--tRNA ligase (897 aa).

Positions 59 to 69 match the 'HIGH' region motif; that stretch reads PYANGDIHVGH. Position 552 (Glu-552) interacts with L-isoleucyl-5'-AMP. Positions 593-597 match the 'KMSKS' region motif; it reads KMSKS. Position 596 (Lys-596) interacts with ATP. Residues Cys-872, Cys-875, Cys-890, and Cys-893 each coordinate Zn(2+).

Belongs to the class-I aminoacyl-tRNA synthetase family. IleS type 1 subfamily. As to quaternary structure, monomer. The cofactor is Zn(2+).

The protein resides in the cytoplasm. It catalyses the reaction tRNA(Ile) + L-isoleucine + ATP = L-isoleucyl-tRNA(Ile) + AMP + diphosphate. Its function is as follows. Catalyzes the attachment of isoleucine to tRNA(Ile). As IleRS can inadvertently accommodate and process structurally similar amino acids such as valine, to avoid such errors it has two additional distinct tRNA(Ile)-dependent editing activities. One activity is designated as 'pretransfer' editing and involves the hydrolysis of activated Val-AMP. The other activity is designated 'posttransfer' editing and involves deacylation of mischarged Val-tRNA(Ile). This is Isoleucine--tRNA ligase from Mycoplasmoides gallisepticum (strain R(low / passage 15 / clone 2)) (Mycoplasma gallisepticum).